The chain runs to 244 residues: Krueppel-like factor 9 (244 aa).

Disordered stretches follow at residues 26–51 and 79–143; these read EHGG…GDPG and PSVC…EKRH. The span at 32–51 shows a compositional bias: basic and acidic residues; it reads EAERLRLPEREVTKEHGDPG. S122 bears the Phosphoserine mark. A compositionally biased stretch (basic residues) spans 134 to 143; sequence KGKHASEKRH. C2H2-type zinc fingers lie at residues 143–167, 173–197, and 203–225; these read HKCP…YRVH, FPCT…YRTH, and FRCP…ARRH.

It belongs to the Sp1 C2H2-type zinc-finger protein family. In terms of assembly, interacts with ZZEF1.

Its subcellular location is the nucleus. Its function is as follows. Transcription factor that binds to GC box promoter elements. Selectively activates mRNA synthesis from genes containing tandem repeats of GC boxes but represses genes with a single GC box. Acts as an epidermal circadian transcription factor regulating keratinocyte proliferation. This is Krueppel-like factor 9 (Klf9) from Mus musculus (Mouse).